A 249-amino-acid polypeptide reads, in one-letter code: ATP synthase subunit a, chloroplastic (249 aa).

Transmembrane regions (helical) follow at residues 40–60 (QVLITSWVVIAILLGSAVLAI), 97–117 (VPFIGTLFLFIFVSNWSGALL), 136–156 (INTTVALALLTSVAYFYAGLS), 201–221 (LVVVVLVSLVPLVVPIPVMFL), and 222–242 (GLFTSGIQALIFATLAAAYIG).

It belongs to the ATPase A chain family. In terms of assembly, F-type ATPases have 2 components, CF(1) - the catalytic core - and CF(0) - the membrane proton channel. CF(1) has five subunits: alpha(3), beta(3), gamma(1), delta(1), epsilon(1). CF(0) has four main subunits: a, b, b' and c.

The protein resides in the plastid. Its subcellular location is the chloroplast thylakoid membrane. Its function is as follows. Key component of the proton channel; it plays a direct role in the translocation of protons across the membrane. The sequence is that of ATP synthase subunit a, chloroplastic from Nasturtium officinale (Watercress).